The sequence spans 88 residues: Large ribosomal subunit protein bL27 (88 aa).

Positions 1–21 (MAHKKGASSSRNGRDSAAQRL) are disordered.

This sequence belongs to the bacterial ribosomal protein bL27 family.

This chain is Large ribosomal subunit protein bL27, found in Mycobacterium marinum (strain ATCC BAA-535 / M).